The sequence spans 645 residues: Dictomallein-like protein (645 aa).

A signal peptide spans 1 to 13; it reads MKLSMVMVLLVLA. The segment at 19–55 is disordered; sequence CGGNDDNNSERTHESGDSNGDVTTPDNDASSNDEDDA. The Peptidase M66 domain maps to 177–448; sequence PALHPELDLT…QRWVRNRARM (272 aa). A Zn(2+)-binding site is contributed by histidine 333. Residue glutamate 334 is part of the active site. 2 residues coordinate Zn(2+): histidine 337 and histidine 343.

This sequence belongs to the dictomallein family. Requires Zn(2+) as cofactor.

The protein resides in the secreted. This is Dictomallein-like protein (dtmL) from Hahella chejuensis (strain KCTC 2396).